The sequence spans 318 residues: Protoheme IX farnesyltransferase (318 aa).

9 helical membrane-spanning segments follow: residues 34 to 54 (VMSL…GQIN), 55 to 75 (PVIG…SGAL), 95 to 115 (IPAG…LSAF), 118 to 138 (IILG…TIFF), 155 to 175 (IVIG…CVTG), 182 to 202 (IVLF…LALF), 228 to 250 (IVVY…FASL), 254 to 273 (AFAT…VLRM), and 287 to 307 (FAFS…DYMI).

It belongs to the UbiA prenyltransferase family. Protoheme IX farnesyltransferase subfamily.

The protein localises to the cell inner membrane. It catalyses the reaction heme b + (2E,6E)-farnesyl diphosphate + H2O = Fe(II)-heme o + diphosphate. The protein operates within porphyrin-containing compound metabolism; heme O biosynthesis; heme O from protoheme: step 1/1. In terms of biological role, converts heme B (protoheme IX) to heme O by substitution of the vinyl group on carbon 2 of heme B porphyrin ring with a hydroxyethyl farnesyl side group. This is Protoheme IX farnesyltransferase from Sinorhizobium fredii (strain NBRC 101917 / NGR234).